Here is a 55-residue protein sequence, read N- to C-terminus: Large ribosomal subunit protein bL33 (55 aa).

The protein belongs to the bacterial ribosomal protein bL33 family.

The sequence is that of Large ribosomal subunit protein bL33 from Sinorhizobium fredii (strain NBRC 101917 / NGR234).